An 815-amino-acid polypeptide reads, in one-letter code: Glycogen phosphorylase (815 aa).

Lys662 is modified (N6-(pyridoxal phosphate)lysine).

It belongs to the glycogen phosphorylase family. Pyridoxal 5'-phosphate serves as cofactor.

It carries out the reaction [(1-&gt;4)-alpha-D-glucosyl](n) + phosphate = [(1-&gt;4)-alpha-D-glucosyl](n-1) + alpha-D-glucose 1-phosphate. Functionally, phosphorylase is an important allosteric enzyme in carbohydrate metabolism. Enzymes from different sources differ in their regulatory mechanisms and in their natural substrates. However, all known phosphorylases share catalytic and structural properties. The polypeptide is Glycogen phosphorylase (glgP) (Shigella flexneri).